A 365-amino-acid polypeptide reads, in one-letter code: Flagellar P-ring protein (365 aa).

Positions 1-19 (MIKFLSTFMLLLVTTVVQA) are cleaved as a signal peptide.

It belongs to the FlgI family. In terms of assembly, the basal body constitutes a major portion of the flagellar organelle and consists of four rings (L,P,S, and M) mounted on a central rod.

The protein localises to the periplasm. The protein resides in the bacterial flagellum basal body. Functionally, assembles around the rod to form the L-ring and probably protects the motor/basal body from shearing forces during rotation. This is Flagellar P-ring protein from Escherichia fergusonii (strain ATCC 35469 / DSM 13698 / CCUG 18766 / IAM 14443 / JCM 21226 / LMG 7866 / NBRC 102419 / NCTC 12128 / CDC 0568-73).